A 142-amino-acid chain; its full sequence is Protein KNATM (142 aa).

Residues 4-36 (KKDENSILENMKQEINHSLKEEAQEEEEILKKR) are a coiled coil.

In terms of assembly, interacts with KNAT1, KNAT3, KNAT4, BEL1, BLH2, BLH4 and BLH9, but not with BLH8 or the KNATM-A and KNATM-C isoforms. Isoforms KNATM-A and KNATM-C: no interactions with KNATM-B, KNOXX or BELL proteins. As to expression, detected in inflorescences, seedlings, leaves, hydathodes, stems, roots, embryo and siliques. Expressed in a polar pattern in organ primordia and at the boundary of mature organs. Detected in the lateral domains of flower meristems, but not in the inflorescence meristem or the vegetative shoot apical meristem.

The protein localises to the cytoplasm. It is found in the nucleus. Transcriptional regulator involved in leaf proximal/distal patterning. May act by sequestering BELL transcription factors. The polypeptide is Protein KNATM (Arabidopsis thaliana (Mouse-ear cress)).